We begin with the raw amino-acid sequence, 161 residues long: RNA pyrophosphohydrolase (161 aa).

The region spanning 12 to 154 is the Nudix hydrolase domain; it reads PYRPGVGMMI…KRKLYQAVVK (143 aa). The short motif at 46 to 67 is the Nudix box element; it reads GGIVPGETPSIAAMREMLEEIG.

Belongs to the Nudix hydrolase family. RppH subfamily. A divalent metal cation is required as a cofactor.

Accelerates the degradation of transcripts by removing pyrophosphate from the 5'-end of triphosphorylated RNA, leading to a more labile monophosphorylated state that can stimulate subsequent ribonuclease cleavage. This chain is RNA pyrophosphohydrolase, found in Rickettsia canadensis (strain McKiel).